Here is a 485-residue protein sequence, read N- to C-terminus: N-succinylglutamate 5-semialdehyde dehydrogenase (485 aa).

220-225 (GSANTG) contributes to the NAD(+) binding site. Active-site residues include Glu243 and Cys278.

Belongs to the aldehyde dehydrogenase family. AstD subfamily.

The catalysed reaction is N-succinyl-L-glutamate 5-semialdehyde + NAD(+) + H2O = N-succinyl-L-glutamate + NADH + 2 H(+). It functions in the pathway amino-acid degradation; L-arginine degradation via AST pathway; L-glutamate and succinate from L-arginine: step 4/5. Catalyzes the NAD-dependent reduction of succinylglutamate semialdehyde into succinylglutamate. This Vibrio cholerae serotype O1 (strain ATCC 39541 / Classical Ogawa 395 / O395) protein is N-succinylglutamate 5-semialdehyde dehydrogenase.